The following is a 266-amino-acid chain: GTP cyclohydrolase FolE2 1 (266 aa).

This sequence belongs to the GTP cyclohydrolase IV family.

The catalysed reaction is GTP + H2O = 7,8-dihydroneopterin 3'-triphosphate + formate + H(+). Its pathway is cofactor biosynthesis; 7,8-dihydroneopterin triphosphate biosynthesis; 7,8-dihydroneopterin triphosphate from GTP: step 1/1. Functionally, converts GTP to 7,8-dihydroneopterin triphosphate. This Dechloromonas aromatica (strain RCB) protein is GTP cyclohydrolase FolE2 1.